Reading from the N-terminus, the 576-residue chain is Potassium-transporting ATPase potassium-binding subunit (576 aa).

The next 12 membrane-spanning stretches (helical) occupy residues 4 to 24, 65 to 85, 136 to 156, 179 to 199, 257 to 277, 288 to 308, 341 to 361, 371 to 391, 393 to 413, 430 to 450, 497 to 517, and 540 to 560; these read QAWI…WPLG, AYAL…YALQ, ALGV…FALI, VYVL…QGVI, LSNF…VFAF, GALL…VTSL, FGIA…CGAV, LGGA…GGVG, GLYG…LMIG, MTAV…AVAL, LLLA…VLAI, and LFVV…YVPA.

It belongs to the KdpA family. The system is composed of three essential subunits: KdpA, KdpB and KdpC.

Its subcellular location is the cell inner membrane. Part of the high-affinity ATP-driven potassium transport (or Kdp) system, which catalyzes the hydrolysis of ATP coupled with the electrogenic transport of potassium into the cytoplasm. This subunit binds the periplasmic potassium ions and delivers the ions to the membrane domain of KdpB through an intramembrane tunnel. This Methylibium petroleiphilum (strain ATCC BAA-1232 / LMG 22953 / PM1) protein is Potassium-transporting ATPase potassium-binding subunit.